We begin with the raw amino-acid sequence, 221 residues long: uncharacterized protein (221 aa).

The interval 1-30 (MVPPNPAHQPARRTQPQLQPQSQPRAQPLP) is disordered. A compositionally biased stretch (polar residues) spans 12-25 (RRTQPQLQPQSQPR). A helical membrane pass occupies residues 37-57 (VLCIIVALVLLGLLVGLAILI).

The protein localises to the membrane. This is an uncharacterized protein from Arabidopsis thaliana (Mouse-ear cress).